A 467-amino-acid chain; its full sequence is Glycosyl hydrolase family 109 protein 1 (467 aa).

Positions 1-22 (MKKLLLNTLIGLALLTCQTSFA) are cleaved as a signal peptide. NAD(+) contacts are provided by residues 66–67 (MR), Asp-88, 137–140 (WKHH), 157–158 (EV), and Asn-186. Substrate-binding positions include Tyr-215, Arg-231, 243–246 (YATH), and Tyr-321. Residue Tyr-243 participates in NAD(+) binding.

The protein belongs to the Gfo/Idh/MocA family. Glycosyl hydrolase 109 subfamily. NAD(+) serves as cofactor.

Its function is as follows. Glycosidase. The chain is Glycosyl hydrolase family 109 protein 1 from Bacteroides thetaiotaomicron (strain ATCC 29148 / DSM 2079 / JCM 5827 / CCUG 10774 / NCTC 10582 / VPI-5482 / E50).